A 377-amino-acid chain; its full sequence is N-acetyldiaminopimelate deacetylase (377 aa).

The active site involves aspartate 69. Glutamate 128 serves as the catalytic Proton acceptor.

It belongs to the peptidase M20A family. N-acetyldiaminopimelate deacetylase subfamily.

It carries out the reaction N-acetyl-(2S,6S)-2,6-diaminopimelate + H2O = (2S,6S)-2,6-diaminopimelate + acetate. The protein operates within amino-acid biosynthesis; L-lysine biosynthesis via DAP pathway; LL-2,6-diaminopimelate from (S)-tetrahydrodipicolinate (acetylase route): step 3/3. Functionally, catalyzes the conversion of N-acetyl-diaminopimelate to diaminopimelate and acetate. The protein is N-acetyldiaminopimelate deacetylase of Brevibacillus brevis (strain 47 / JCM 6285 / NBRC 100599).